The primary structure comprises 408 residues: Aspartokinase 2 (408 aa).

ATP is bound at residue 7–10 (KFGG). Substrate is bound at residue 25–30 (RAIAEK). ATP is bound at residue S41. Substrate-binding positions include 47–49 (TDE), E74, 125–126 (LE), 150–153 (RGGS), and S153. Residues 173–174 (TD) and 179–184 (FTTDPR) contribute to the ATP site. 2 consecutive ACT domains span residues 264–337 (VTIY…TESK) and 343–408 (IVGS…PSAV). Substrate is bound by residues 289 to 291 (NVD), Q295, 354 to 355 (VA), 368 to 369 (LI), and 375 to 376 (SE).

It belongs to the aspartokinase family. Tetramer consisting of 2 isoforms Alpha (catalytic and regulation) and of a homodimer of 2 isoforms Beta (regulation).

The enzyme catalyses L-aspartate + ATP = 4-phospho-L-aspartate + ADP. Its pathway is amino-acid biosynthesis; L-lysine biosynthesis via DAP pathway; (S)-tetrahydrodipicolinate from L-aspartate: step 1/4. It functions in the pathway amino-acid biosynthesis; L-methionine biosynthesis via de novo pathway; L-homoserine from L-aspartate: step 1/3. The protein operates within amino-acid biosynthesis; L-threonine biosynthesis; L-threonine from L-aspartate: step 1/5. Its activity is regulated as follows. Lysine-sensitive. Regulated by degradation in response to starvation of cells for various nutrients. Ammonium starvation induced the fastest aspartokinase II decline, followed by amino acid starvation and glucose limitation. In terms of biological role, catalyzes the phosphorylation of the beta-carboxyl group of aspartic acid with ATP to yield 4-phospho-L-aspartate, which is involved in the branched biosynthetic pathway leading to the biosynthesis of amino acids threonine, isoleucine and methionine. This chain is Aspartokinase 2 (lysC), found in Bacillus subtilis (strain 168).